We begin with the raw amino-acid sequence, 105 residues long: Heat shock protein HspQ (105 aa).

This sequence belongs to the HspQ family.

The protein localises to the cytoplasm. Involved in the degradation of certain denaturated proteins, including DnaA, during heat shock stress. This is Heat shock protein HspQ from Blochmanniella pennsylvanica (strain BPEN).